The sequence spans 1291 residues: Vacuolating cytotoxin autotransporter (1291 aa).

The first 33 residues, 1-33, serve as a signal peptide directing secretion; the sequence is MEIQQTHRKINRPLVSLALVGALVSITPQQSHA. The tract at residues 326 to 374 is disordered; that stretch reads PPEGGYKDKPNDKPSNTTQNNAKNDKQESSQNNSNTQVINPPNSAQKTE. 2 stretches are compositionally biased toward polar residues: residues 338–347 and 354–374; these read KPSNTTQNNA and SSQNNSNTQVINPPNSAQKTE. Residues 1018–1291 enclose the Autotransporter domain; the sequence is KYEKPTNVWA…ASNLGMRYSF (274 aa).

It is found in the periplasm. Its subcellular location is the secreted. The protein resides in the cell surface. It localises to the cell outer membrane. In terms of biological role, induces vacuolation of eukaryotic cells. Causes ulceration and gastric lesions. This is Vacuolating cytotoxin autotransporter (vacA) from Helicobacter pylori (Campylobacter pylori).